The chain runs to 89 residues: Acylphosphatase (89 aa).

Residues 4–89 (SRRFLVSGTV…EQPPEGFRVL (86 aa)) enclose the Acylphosphatase-like domain. Residues arginine 19 and asparagine 37 contribute to the active site.

This sequence belongs to the acylphosphatase family.

It catalyses the reaction an acyl phosphate + H2O = a carboxylate + phosphate + H(+). The sequence is that of Acylphosphatase (acyP) from Alkalilimnicola ehrlichii (strain ATCC BAA-1101 / DSM 17681 / MLHE-1).